The chain runs to 447 residues: GTPase Der (447 aa).

EngA-type G domains are found at residues 3 to 167 (PVIA…FAER) and 181 to 354 (TRIA…AAAM). GTP contacts are provided by residues 9 to 16 (GRPNVGKS), 56 to 60 (DTGGF), 119 to 122 (NKAE), 187 to 194 (GRPNVGKS), 234 to 238 (DTAGL), and 299 to 302 (NKWD). A KH-like domain is found at 355 to 439 (VKLPTPKLTR…PLRIEFRTNK (85 aa)).

It belongs to the TRAFAC class TrmE-Era-EngA-EngB-Septin-like GTPase superfamily. EngA (Der) GTPase family. Associates with the 50S ribosomal subunit.

GTPase that plays an essential role in the late steps of ribosome biogenesis. The chain is GTPase Der from Ralstonia pickettii (strain 12J).